Reading from the N-terminus, the 94-residue chain is Small ribosomal subunit protein bS18 (94 aa).

Residues 1 to 12 (MSEQNSRPQNSE) show a composition bias toward low complexity. Positions 1 to 29 (MSEQNSRPQNSERPQRSRRPQGGPRRRRK) are disordered. Over residues 16-29 (RSRRPQGGPRRRRK) the composition is skewed to basic residues.

The protein belongs to the bacterial ribosomal protein bS18 family. In terms of assembly, part of the 30S ribosomal subunit. Forms a tight heterodimer with protein bS6.

Functionally, binds as a heterodimer with protein bS6 to the central domain of the 16S rRNA, where it helps stabilize the platform of the 30S subunit. This Leuconostoc mesenteroides subsp. mesenteroides (strain ATCC 8293 / DSM 20343 / BCRC 11652 / CCM 1803 / JCM 6124 / NCDO 523 / NBRC 100496 / NCIMB 8023 / NCTC 12954 / NRRL B-1118 / 37Y) protein is Small ribosomal subunit protein bS18.